Consider the following 370-residue polypeptide: Lipoyl synthase, mitochondrial (370 aa).

Cys100, Cys105, Cys111, Cys131, Cys135, Cys138, and Ser346 together coordinate [4Fe-4S] cluster. The region spanning Asp116–Leu335 is the Radical SAM core domain.

It belongs to the radical SAM superfamily. Lipoyl synthase family. It depends on [4Fe-4S] cluster as a cofactor.

The protein resides in the mitochondrion. It catalyses the reaction [[Fe-S] cluster scaffold protein carrying a second [4Fe-4S](2+) cluster] + N(6)-octanoyl-L-lysyl-[protein] + 2 oxidized [2Fe-2S]-[ferredoxin] + 2 S-adenosyl-L-methionine + 4 H(+) = [[Fe-S] cluster scaffold protein] + N(6)-[(R)-dihydrolipoyl]-L-lysyl-[protein] + 4 Fe(3+) + 2 hydrogen sulfide + 2 5'-deoxyadenosine + 2 L-methionine + 2 reduced [2Fe-2S]-[ferredoxin]. It participates in protein modification; protein lipoylation via endogenous pathway; protein N(6)-(lipoyl)lysine from octanoyl-[acyl-carrier-protein]: step 2/2. Catalyzes the radical-mediated insertion of two sulfur atoms into the C-6 and C-8 positions of the octanoyl moiety bound to the lipoyl domains of lipoate-dependent enzymes, thereby converting the octanoylated domains into lipoylated derivatives. This chain is Lipoyl synthase, mitochondrial (lip5), found in Schizosaccharomyces pombe (strain 972 / ATCC 24843) (Fission yeast).